The sequence spans 158 residues: MFSANIARKVVCSVCRASLRPTVCPVVYRGYRGDAPEPTILEIPLPPWQERAGEALDIKRKRLLYESRKRGMLENCILLSLFAKQYLNTMSESQLKQYDRLINEPSNDWDIYYWATDTQPTPEVYQGEVMDMLKEFTKNRDMEQRLDAPNLEYLDKSS.

Residues 1–17 (MFSANIARKVVCSVCRA) constitute a mitochondrion transit peptide.

It belongs to the SDHAF2 family. As to quaternary structure, interacts with sdha within the SDH catalytic dimer.

Its subcellular location is the mitochondrion matrix. In terms of biological role, plays an essential role in the assembly of succinate dehydrogenase (SDH), an enzyme complex (also referred to as respiratory complex II) that is a component of both the tricarboxylic acid (TCA) cycle and the mitochondrial electron transport chain, and which couples the oxidation of succinate to fumarate with the reduction of ubiquinone (coenzyme Q) to ubiquinol. Required for flavinylation (covalent attachment of FAD) of the flavoprotein subunit sdha of the SDH catalytic dimer. In Danio rerio (Zebrafish), this protein is Succinate dehydrogenase assembly factor 2, mitochondrial.